A 102-amino-acid polypeptide reads, in one-letter code: UPF0045 protein Mb1933 (102 aa).

Belongs to the UPF0045 family.

The sequence is that of UPF0045 protein Mb1933 from Mycobacterium bovis (strain ATCC BAA-935 / AF2122/97).